The following is a 130-amino-acid chain: Large ribosomal subunit protein bL19 (130 aa).

Belongs to the bacterial ribosomal protein bL19 family.

Functionally, this protein is located at the 30S-50S ribosomal subunit interface and may play a role in the structure and function of the aminoacyl-tRNA binding site. This is Large ribosomal subunit protein bL19 from Burkholderia ambifaria (strain ATCC BAA-244 / DSM 16087 / CCUG 44356 / LMG 19182 / AMMD) (Burkholderia cepacia (strain AMMD)).